Here is a 398-residue protein sequence, read N- to C-terminus: Phosphoglycerate kinase (398 aa).

Substrate-binding positions include 23–25, R38, 61–64, R122, and R155; these read DFN and HLGK. ATP is bound by residues K206, G297, E328, and 354–357; that span reads GGDS.

This sequence belongs to the phosphoglycerate kinase family. As to quaternary structure, monomer.

The protein localises to the cytoplasm. It carries out the reaction (2R)-3-phosphoglycerate + ATP = (2R)-3-phospho-glyceroyl phosphate + ADP. It functions in the pathway carbohydrate degradation; glycolysis; pyruvate from D-glyceraldehyde 3-phosphate: step 2/5. In Clostridium novyi (strain NT), this protein is Phosphoglycerate kinase.